We begin with the raw amino-acid sequence, 319 residues long: MKTETPSVKIVAITADEAGQRIDNFLRTQLKGVPKSMIYRILRKGEVRVNKKRIKPEYKLEAGDEVRIPPVRVAEREEEAVSPHLQKVAALADVILYEDDHILVLNKPSGTAVHGGSGLSFGVIEGLRALRPEARFLELVHRLDRDTSGVLLVAKKRSALRSLHEQLREKGMQKDYLALVRGQWQSHVKSVQAPLLKNILQSGERIVRVSQEGKPSETRFKVEERYAFATLVRCSPVTGRTHQIRVHTQYAGHPIAFDDRYGDREFDRQLTEAGTGLNRLFLHAAALKFTHPGTGEVMRIEAPMDEGLKRCLQKLRNAR.

Positions 20–83 (QRIDNFLRTQ…AEREEEAVSP (64 aa)) constitute an S4 RNA-binding domain. Aspartate 144 is a catalytic residue.

The protein belongs to the pseudouridine synthase RluA family.

The enzyme catalyses uridine(955/2504/2580) in 23S rRNA = pseudouridine(955/2504/2580) in 23S rRNA. Its function is as follows. Responsible for synthesis of pseudouridine from uracil at positions 955, 2504 and 2580 in 23S ribosomal RNA. This is Ribosomal large subunit pseudouridine synthase C from Escherichia coli (strain K12).